We begin with the raw amino-acid sequence, 72 residues long: Translation initiation factor IF-1 (72 aa).

The S1-like domain maps to 1 to 72 (MSKEDVIELE…TRGRIVWRSK (72 aa)).

Belongs to the IF-1 family. As to quaternary structure, component of the 30S ribosomal translation pre-initiation complex which assembles on the 30S ribosome in the order IF-2 and IF-3, IF-1 and N-formylmethionyl-tRNA(fMet); mRNA recruitment can occur at any time during PIC assembly.

The protein resides in the cytoplasm. In terms of biological role, one of the essential components for the initiation of protein synthesis. Stabilizes the binding of IF-2 and IF-3 on the 30S subunit to which N-formylmethionyl-tRNA(fMet) subsequently binds. Helps modulate mRNA selection, yielding the 30S pre-initiation complex (PIC). Upon addition of the 50S ribosomal subunit IF-1, IF-2 and IF-3 are released leaving the mature 70S translation initiation complex. The sequence is that of Translation initiation factor IF-1 from Caldicellulosiruptor saccharolyticus (strain ATCC 43494 / DSM 8903 / Tp8T 6331).